The sequence spans 267 residues: C-type lectin domain family 12 member A (267 aa).

Topologically, residues 1-43 (MSEEIVYANLKIQDPDKKEETQKSDKCGGKVSADASHSQQKTV) are cytoplasmic. Residues 5–10 (IVYANL) carry the ITIM motif motif. A Phosphotyrosine modification is found at Y7. A helical; Signal-anchor for type II membrane protein membrane pass occupies residues 44–64 (LILILLCLLLFIGMGVLGGIF). At 65 to 267 (YTTLATEMIK…VLNGLPEDSR (203 aa)) the chain is on the extracellular side. N98 and N105 each carry an N-linked (GlcNAc...) asparagine glycan. Intrachain disulfides connect C118-C130, C133-C144, C161-C246, and C225-C238. Residues 140 to 247 (YKDSCYSQLN…CTDENNIICE (108 aa)) form the C-type lectin domain. N-linked (GlcNAc...) asparagine glycosylation occurs at N165.

Homodimer; disulfide-linked. Interacts (when the ITIM motif is phosphorylated) with PTPN6 and PTPN11. Phosphorylated at Tyr-7 by SRC in the ITIM motif following ligand-binding, promoting recruitment of tyrosine-protein phosphatases PTPN6 and PTPN11. In terms of tissue distribution, mainly expressed in lymphoid tissues. Preferentially expressed in peripheral blood leukocytes; less frequent in thymus, spleen, heart, brain and lung; and undetectable in other tissues.

It localises to the cell membrane. Its function is as follows. Myeloid inhibitory C-type lectin receptor that acts as a negative regulator of myeloid cell activation. Myeloid cell inhibition is required to limit proinflammatory pathways and protect against excessive inflammation. Specifically recognizes and binds various structures, such as neutrophil extracellular traps (NETs) or monosodium urate crystals. Also acts as a pattern-recognition receptor for pathogen-associated molecules, such as plasmodium hemozoin or mycobacterial micolic acid. Ligand-binding induces phosphorylation of its ITIM motif, followed by recruitment of tyrosine-protein phosphatases PTPN6 and PTPN11, which counteract tyrosine-protein kinase SYK, thereby preventing myeloid cell activation. Acts as a pattern-recognition receptor for NETs in neutrophils: specifically recognizes DNA in NETs, leading to inhibit neutrophil activation and limit further NET formation. This regulation is essential for controlling key neutrophil responses and limit NET-mediated inflammatory conditions. Also recognizes dead cells by acting as a receptor for monosodium urate crystals, leading to down-regulate neutrophil activation. Binding to monosodium urate crystals also promotes the type I interferon response. Acts as an inhibitor of natural killer (NK) cell cytotoxicity. Also acts as an ihibitor of dendritic cell maturation in an IL10-dependent manner. This chain is C-type lectin domain family 12 member A, found in Mus musculus (Mouse).